Reading from the N-terminus, the 161-residue chain is MNPRRKKRLTLAVALVFGLGATIGLMLYALSQNMDLFYTPTELVQGKPDGTKPEVGQRLRIGGMVVEGSVKRDPQSLIVTFEVADVGPAVTITYNGILPDLFREGQGIVAQGVLVNSTTIEAHEVLAKHDEEYMPPEIAEAMKKTHEPLQYSDEQKQGRVQ.

At 1–8 the chain is on the cytoplasmic side; sequence MNPRRKKR. A helical; Signal-anchor for type II membrane protein transmembrane segment spans residues 9-29; it reads LTLAVALVFGLGATIGLMLYA. Topologically, residues 30–161 are periplasmic; it reads LSQNMDLFYT…SDEQKQGRVQ (132 aa). Heme-binding residues include histidine 129 and tyrosine 133.

It belongs to the CcmE/CycJ family.

Its subcellular location is the cell inner membrane. Its function is as follows. Heme chaperone required for the biogenesis of c-type cytochromes. Transiently binds heme delivered by CcmC and transfers the heme to apo-cytochromes in a process facilitated by CcmF and CcmH. The protein is Cytochrome c-type biogenesis protein CcmE of Photobacterium profundum (strain SS9).